Consider the following 546-residue polypeptide: Probable lysosomal cobalamin transporter (546 aa).

Transmembrane regions (helical) follow at residues 8–28 (LAQGWIPFTVVVVLAILFSWF), 48–68 (IIALFIALMTTALVPVDIFLV), 102–122 (ILYALLAFFVFVIIPFMYFFF), and 141–161 (YSIGFLIVASVLLLVGAFAPL). Asparagine 167 is a glycosylation site (N-linked (GlcNAc...) asparagine). 4 helical membrane-spanning segments follow: residues 189-209 (TALSLLIGFLTLIGMLIMITY), 304-324 (MVFGAFFLLVALLIFVSLFIT), 352-372 (IIMVYAQIVFPLDYCLFLLVV), and 407-427 (ALLFMCVMLMLIVLSLNVMLF). Residues asparagine 444, asparagine 452, and asparagine 459 are each glycosylated (N-linked (GlcNAc...) asparagine). A helical transmembrane segment spans residues 495 to 515 (VWFFGACYYWGTWLFLVVFMT).

The protein belongs to the LIMR family. LMBRD1 subfamily.

The protein resides in the lysosome membrane. Its function is as follows. Probable lysosomal cobalamin transporter. Required to export cobalamin from lysosomes allowing its conversion to cofactors. This is Probable lysosomal cobalamin transporter from Nematostella vectensis (Starlet sea anemone).